Here is a 258-residue protein sequence, read N- to C-terminus: NAD kinase (258 aa).

Residue D45 is the Proton acceptor of the active site. NAD(+) contacts are provided by residues 45–46, 117–118, D147, A155, 158–163, and A182; these read DG, NE, and TAYNYS.

It belongs to the NAD kinase family. The cofactor is a divalent metal cation.

It localises to the cytoplasm. It catalyses the reaction NAD(+) + ATP = ADP + NADP(+) + H(+). Its function is as follows. Involved in the regulation of the intracellular balance of NAD and NADP, and is a key enzyme in the biosynthesis of NADP. Catalyzes specifically the phosphorylation on 2'-hydroxyl of the adenosine moiety of NAD to yield NADP. The protein is NAD kinase of Xanthomonas campestris pv. campestris (strain 8004).